Here is a 511-residue protein sequence, read N- to C-terminus: Probable endopeptidase p60 (511 aa).

Positions 1–27 (MNMKKATIVSAAGIAVTAFAAPSVVSA) are cleaved as a signal peptide. The 44-residue stretch at 28–71 (NTVVVASGDTLWGIASKTGTTVDQLKQLNKLDSDRIVPGQKLTI) folds into the LysM 1 domain. In terms of domain architecture, SH3b spans 78–142 (KVEKSVSATW…VNGKYLSDAK (65 aa)). The LysM 2 domain occupies 175–218 (STYKVKSGDTIWALSVKYGVPVQKLIEWNNLSSSSIYVGQTIAV). Low complexity-rich tracts occupy residues 229-257 (TVKQAAPAKVAPKQEVKQTAPAKQEQAKP) and 264-282 (KPAVSKPKAATPAPTAKPA). The tract at residues 229 to 291 (TVKQAAPAKV…AVEQKASTPA (63 aa)) is disordered. Residues 297-341 (ATYKVQNGDSLGKIASLFKVSVADLTNWNNLNATITIYAGQELSV) enclose the LysM 3 domain. 2 stretches are compositionally biased toward low complexity: residues 347–362 (KPKPAAPAKPAVSKPA) and 372–390 (TNTTNNSTPTTNVNNNTSQ). Residues 347-390 (KPKPAAPAKPAVSKPATSTPAKVTPTNTTNNSTPTTNVNNNTSQ) are disordered. A NlpC/P60 domain is found at 393 to 511 (SASFSALYAE…GQYLVGFGRV (119 aa)). The Nucleophile role is filled by cysteine 423. Histidine 473 functions as the Proton acceptor in the catalytic mechanism. Residue aspartate 485 is part of the active site.

This sequence belongs to the peptidase C40 family.

Its function is as follows. This major extracellular protein may be involved in the invasion of non-professional phagocytic cells by Listeria. The polypeptide is Probable endopeptidase p60 (iap) (Listeria grayi (Listeria murrayi)).